The primary structure comprises 364 residues: Histidinol-phosphate aminotransferase (364 aa).

K225 is subject to N6-(pyridoxal phosphate)lysine.

The protein belongs to the class-II pyridoxal-phosphate-dependent aminotransferase family. Histidinol-phosphate aminotransferase subfamily. As to quaternary structure, homodimer. The cofactor is pyridoxal 5'-phosphate.

The enzyme catalyses L-histidinol phosphate + 2-oxoglutarate = 3-(imidazol-4-yl)-2-oxopropyl phosphate + L-glutamate. It participates in amino-acid biosynthesis; L-histidine biosynthesis; L-histidine from 5-phospho-alpha-D-ribose 1-diphosphate: step 7/9. The sequence is that of Histidinol-phosphate aminotransferase from Sulfurovum sp. (strain NBC37-1).